The sequence spans 1009 residues: DNA polymerase catalytic subunit (1009 aa).

This sequence belongs to the DNA polymerase type-B family.

It is found in the host nucleus. The enzyme catalyses DNA(n) + a 2'-deoxyribonucleoside 5'-triphosphate = DNA(n+1) + diphosphate. This chain is DNA polymerase catalytic subunit (9), found in Saimiri sciureus (Common squirrel monkey).